The following is a 474-amino-acid chain: DNA damage checkpoint control protein MEC3 (474 aa).

Position 452 is a phosphoserine (serine 452).

Belongs to the MEC3 family. In terms of assembly, component of the checkpoint clamp complex composed of DDC1, MEC3 and RAD17. The interaction with MEC3 is performed in a RAD17-dependent manner. The checkpoint clamp complex loads onto DNA. Interacts with the DNA polymerase zeta subunit REV7. Also forms a heterotrimer with 2 RAD17 subunits. Interacts with SET1.

Its subcellular location is the nucleus. Its function is as follows. Component of the checkpoint clamp complex involved in the surveillance mechanism that allows the DNA repair pathways to act to restore the integrity of the DNA prior to DNA synthesis or separation of the replicated chromosomes. Associates with sites of DNA damage and modulates the MEC1 signaling pathway and the activation of RAD53 in response to DNA damage at phase G1. The complex also physically regulates DNA polymerase zeta-dependent mutagenesis by controlling the access of polymerase zeta to damaged DNA. This is DNA damage checkpoint control protein MEC3 (MEC3) from Saccharomyces cerevisiae (strain ATCC 204508 / S288c) (Baker's yeast).